The following is a 458-amino-acid chain: Monomethylamine methyltransferase MtmB2 (458 aa).

Pyrrolysine 202 is a non-standard amino acid (pyrrolysine).

It belongs to the monomethylamine methyltransferase family. In terms of assembly, can form a complex with MtmC (MtmC1 or MtmC2).

The enzyme catalyses Co(I)-[methylamine-specific corrinoid protein] + methylamine + H(+) = methyl-Co(III)-[methylamine-specific corrinoid protein] + NH4(+). It participates in one-carbon metabolism; methanogenesis from methylamine. In terms of biological role, catalyzes the transfer of the methyl group from monomethylamine to the corrinoid cofactor of MtmC (MtmC1 or MtmC2). The polypeptide is Monomethylamine methyltransferase MtmB2 (mtmB2) (Methanosarcina barkeri).